A 527-amino-acid polypeptide reads, in one-letter code: MEVAMAMAVKVLLSLCCVGACGLAVYLYHILWLVPQKVLAKFEDQKIGGPRPSFPYGNLADMREAAAAAKAARASARRSGSGGGGIVHDYRPAVLPYYEKWRKEYGPIFTYSMGNVVFLHVSRPDVVRDINLCVSLDLGKSSYLKATHEPLFGGGILKSNGEAWLHQRKIIAPEFFLDKVKGMVDLMVDSAQPLLMSWEERVDRNGGITDIKIDDDIRAYSADVISRTCFGSSYIKGKEIFMKIRELQQAVSKPNVLAEMTGLRFFPSMRNKQAWELHKQVRKLILEIVKESGEDRNLLSAILHSASTSRVGIAEAENFIVDNCKSIYFAGHESTAVTAAWCLMLLGLHPEWQNRVREEVHEVCRGQPVDSRSLQKMKNLTMVIQETLRLYPAGAFVSRQALQELKLGGVHIPKGVNIYIPVSTMHLDPELWGPDVKEFNPERFSDVRPQLHSYLPFGAGARTCLGQGFAMAELKILISLIVSKFVLKLSPHYQHSPTLKLIVEPELGVDLTLTKVQSVCTKRGTAI.

The Lumenal portion of the chain corresponds to 1–14 (MEVAMAMAVKVLLS). A helical; Signal-anchor for type III membrane protein transmembrane segment spans residues 15-35 (LCCVGACGLAVYLYHILWLVP). Topologically, residues 36–527 (QKVLAKFEDQ…SVCTKRGTAI (492 aa)) are cytoplasmic. A heme-binding site is contributed by Cys-464.

Belongs to the cytochrome P450 family. Heme serves as cofactor.

The protein localises to the membrane. May be involved in gibberellin metabolism. The polypeptide is Cytochrome P450 714B3 (CYP714B3) (Zea mays (Maize)).